A 329-amino-acid chain; its full sequence is Probable endo-beta-1,4-glucanase B (329 aa).

The first 18 residues, 1–18, serve as a signal peptide directing secretion; that stretch reads MKFGSIVLIAAAAGSAVA. N-linked (GlcNAc...) asparagine glycans are attached at residues Asn33 and Asn96. Glu156 (proton donor) is an active-site residue. The active-site Nucleophile is Glu263.

It belongs to the glycosyl hydrolase 5 (cellulase A) family.

Its subcellular location is the secreted. The enzyme catalyses Endohydrolysis of (1-&gt;4)-beta-D-glucosidic linkages in cellulose, lichenin and cereal beta-D-glucans.. Has endoglucanase activity on substrates containing beta-1,4 glycosidic bonds, like in carboxymethylcellulose (CMC), hydroxyethylcellulose (HEC) and beta-glucan. Involved in the degradation of complex natural cellulosic substrates. This is Probable endo-beta-1,4-glucanase B (eglB) from Neosartorya fischeri (strain ATCC 1020 / DSM 3700 / CBS 544.65 / FGSC A1164 / JCM 1740 / NRRL 181 / WB 181) (Aspergillus fischerianus).